A 253-amino-acid polypeptide reads, in one-letter code: Probable transcriptional regulatory protein Mlut_12910 (253 aa).

This sequence belongs to the TACO1 family.

It localises to the cytoplasm. This is Probable transcriptional regulatory protein Mlut_12910 from Micrococcus luteus (strain ATCC 4698 / DSM 20030 / JCM 1464 / CCM 169 / CCUG 5858 / IAM 1056 / NBRC 3333 / NCIMB 9278 / NCTC 2665 / VKM Ac-2230) (Micrococcus lysodeikticus).